The primary structure comprises 215 residues: 3-isopropylmalate dehydratase small subunit (215 aa).

It belongs to the LeuD family. LeuD type 1 subfamily. Heterodimer of LeuC and LeuD.

It carries out the reaction (2R,3S)-3-isopropylmalate = (2S)-2-isopropylmalate. It functions in the pathway amino-acid biosynthesis; L-leucine biosynthesis; L-leucine from 3-methyl-2-oxobutanoate: step 2/4. Its function is as follows. Catalyzes the isomerization between 2-isopropylmalate and 3-isopropylmalate, via the formation of 2-isopropylmaleate. The polypeptide is 3-isopropylmalate dehydratase small subunit (Xanthomonas euvesicatoria pv. vesicatoria (strain 85-10) (Xanthomonas campestris pv. vesicatoria)).